Consider the following 305-residue polypeptide: Carbamate kinase (305 aa).

Belongs to the carbamate kinase family.

It is found in the cytoplasm. The catalysed reaction is hydrogencarbonate + NH4(+) + ATP = carbamoyl phosphate + ADP + H2O + H(+). The protein operates within metabolic intermediate metabolism; carbamoyl phosphate degradation; CO(2) and NH(3) from carbamoyl phosphate: step 1/1. This is Carbamate kinase (arcC) from Thermoplasma volcanium (strain ATCC 51530 / DSM 4299 / JCM 9571 / NBRC 15438 / GSS1).